Consider the following 551-residue polypeptide: Trigger factor (551 aa).

The PPIase FKBP-type domain occupies 165–250 (GDLVVLDFAG…ATDVRVPGET (86 aa)). The interval 442 to 551 (ADDDTIGKGH…APAKKKAAAE (110 aa)) is disordered. Basic and acidic residues predominate over residues 458-472 (GHDHHDHDHDHDHAA). Low complexity predominate over residues 513–541 (EAAPAPKKAPAKKAAAAKAEEAPAAAPKK). Positions 542-551 (APAKKKAAAE) are enriched in basic residues.

It belongs to the FKBP-type PPIase family. Tig subfamily.

It localises to the cytoplasm. The enzyme catalyses [protein]-peptidylproline (omega=180) = [protein]-peptidylproline (omega=0). Its function is as follows. Involved in protein export. Acts as a chaperone by maintaining the newly synthesized protein in an open conformation. Functions as a peptidyl-prolyl cis-trans isomerase. In Rhizorhabdus wittichii (strain DSM 6014 / CCUG 31198 / JCM 15750 / NBRC 105917 / EY 4224 / RW1) (Sphingomonas wittichii), this protein is Trigger factor.